Reading from the N-terminus, the 108-residue chain is Large ribosomal subunit protein uL24 (108 aa).

Belongs to the universal ribosomal protein uL24 family. Part of the 50S ribosomal subunit.

Functionally, one of two assembly initiator proteins, it binds directly to the 5'-end of the 23S rRNA, where it nucleates assembly of the 50S subunit. One of the proteins that surrounds the polypeptide exit tunnel on the outside of the subunit. The chain is Large ribosomal subunit protein uL24 from Mycoplasma mycoides subsp. mycoides SC (strain CCUG 32753 / NCTC 10114 / PG1).